The following is a 906-amino-acid chain: MQAAVAVSVPFLLLCVLGTCPPARCGQAGDASLMELEKRKENRFVERQSIVPLRLIYRSGGEDESRHDALDTRVRGDLGGPQLTHVDQASFQVDAFGTSFILDVVLNHDLLSSEYIERHIEHGGKTVEVKGGEHCYYQGHIRGNPDSFVALSTCHGLHGMFYDGNHTYLIEPEENDTTQEDFHFHSVYKSRLFEFSLDDLPSEFQQVNITPSKFILKPRPKRSKRQLRRYPRNVEEETKYIELMIVNDHLMFKKHRLSVVHTNTYAKSVVNMADLIYKDQLKTRIVLVAMETWATDNKFAISENPLITLREFMKYRRDFIKEKSDAVHLFSGSQFESSRSGAAYIGGICSLLKGGGVNEFGKTDLMAVTLAQSLAHNIGIISDKRKLASGECKCEDTWSGCIMGDTGYYLPKKFTQCNIEEYHDFLNSGGGACLFNKPSKLLDPPECGNGFIETGEECDCGTPAECVLEGAECCKKCTLTQDSQCSDGLCCKKCKFQPMGTVCREAVNDCDIRETCSGNSSQCAPNIHKMDGYSCDGVQGICFGGRCKTRDRQCKYIWGQKVTASDKYCYEKLNIEGTEKGNCGKDKDTWIQCNKRDVLCGYLLCTNIGNIPRLGELDGEITSTLVVQQGRTLNCSGGHVKLEEDVDLGYVEDGTPCGPQMMCLEHRCLPVASFNFSTCLSSKEGTICSGNGVCSNELKCVCNRHWIGSDCNTYFPHNDDAKTGITLSGNGVAGTNIIIGIIAGTILVLALILGITAWGYKNYREQRQLPQGDYVKKPGDGDSFYSDIPPGVSTNSASSSKKRSNGLSHSWSERIPDTKHISDICENGRPRSNSWQGNLGGNKKKIRGKRFRPRSNSTETLSPAKSPSSSTGSIASSRKYPYPMPPLPDEDKKVNRQSARLWETSI.

Positions 1-25 (MQAAVAVSVPFLLLCVLGTCPPARC) are cleaved as a signal peptide. A propeptide spanning residues 26–222 (GQAGDASLME…KFILKPRPKR (197 aa)) is cleaved from the precursor. Asn-175 carries N-linked (GlcNAc...) asparagine glycosylation. Residues 223 to 736 (SKRQLRRYPR…LSGNGVAGTN (514 aa)) are Extracellular-facing. Residues 239-438 (KYIELMIVND…GGGACLFNKP (200 aa)) enclose the Peptidase M12B domain. Cystine bridges form between Cys-349/Cys-433, Cys-392/Cys-417, Cys-394/Cys-401, Cys-447/Cys-477, Cys-458/Cys-474, Cys-460/Cys-466, Cys-473/Cys-494, Cys-485/Cys-491, Cys-490/Cys-516, Cys-503/Cys-523, Cys-510/Cys-542, Cys-535/Cys-547, Cys-554/Cys-605, Cys-569/Cys-635, Cys-583/Cys-593, Cys-600/Cys-663, and Cys-657/Cys-668. One can recognise a Disintegrin domain in the interval 444–531 (PPECGNGFIE…QCAPNIHKMD (88 aa)). N-linked (GlcNAc...) asparagine glycosylation occurs at Asn-519. A glycan (N-linked (GlcNAc...) asparagine) is linked at Asn-634. A glycan (N-linked (GlcNAc...) asparagine) is linked at Asn-675. The EGF-like domain maps to 675–712 (NFSTCLSSKEGTICSGNGVCSNELKCVCNRHWIGSDCN). Disulfide bonds link Cys-679–Cys-694, Cys-688–Cys-700, and Cys-702–Cys-711. The chain crosses the membrane as a helical span at residues 737–757 (IIIGIIAGTILVLALILGITA). Over 758-906 (WGYKNYREQR…QSARLWETSI (149 aa)) the chain is Cytoplasmic. Residues 785-906 (YSDIPPGVST…QSARLWETSI (122 aa)) are disordered. Residues 793-810 (STNSASSSKKRSNGLSHS) show a composition bias toward low complexity. Ser-810 is modified (phosphoserine). Positions 811–829 (WSERIPDTKHISDICENGR) are enriched in basic and acidic residues. Ser-834 carries the phosphoserine modification. The span at 842-853 (NKKKIRGKRFRP) shows a compositional bias: basic residues. Ser-857, Ser-862, Ser-866, and Ser-870 each carry phosphoserine. A compositionally biased stretch (low complexity) spans 862-877 (SPAKSPSSSTGSIASS).

Interacts with LGI1. Interacts with DLG4/PSD95. Also binds LGI4. Interacts with KCNA2 and DLG2. Interacts with ADAM11. Interacts (via C-terminus) with YWHAB/14-3-3 beta. Interacts (via C-terminus) with YWHAZ/14-3-3 zeta. Post-translationally, the precursor is cleaved by a furin endopeptidase. As to expression, highly expressed in the brain and in some high-grade but not low-grade gliomas. Detected slightly or not at all in other tissues.

The protein resides in the cell membrane. Its subcellular location is the cell projection. It is found in the axon. In terms of biological role, probable ligand for integrin in the brain. This is a non catalytic metalloprotease-like protein. Involved in regulation of cell adhesion and spreading and in inhibition of cell proliferation. Neuronal receptor for LGI1. The polypeptide is Disintegrin and metalloproteinase domain-containing protein 22 (ADAM22) (Homo sapiens (Human)).